The sequence spans 395 residues: Acid ceramidase (395 aa).

The N-terminal stretch at 1-21 is a signal peptide; it reads MLGRSRLTFVLLAAAVTCAEA. An intrachain disulfide couples C31 to C340. C143 (nucleophile) is an active-site residue. 4 N-linked (GlcNAc...) asparagine glycosylation sites follow: N173, N259, N286, and N348. Cysteines 388 and 392 form a disulfide.

The protein belongs to the acid ceramidase family. In terms of assembly, heterodimer; disulfide-linked. The heterodimer is composed of the disulfide-linked alpha and beta chains produced by autocatalytic cleavage of the precursor. N-glycosylated. Post-translationally, proteolytically cleaved into two chains alpha and beta that remain associated via a disulfide bond. Cleavage gives rise to a conformation change that activates the enzyme. The same catalytic Cys residue mediates the autoproteolytic cleavage and subsequent hydrolysis of lipid substrates. The beta chain may undergo an additional C-terminal processing.

The protein resides in the lysosome. It is found in the secreted. The catalysed reaction is an N-acylsphing-4-enine + H2O = sphing-4-enine + a fatty acid. It carries out the reaction N-dodecanoylsphing-4-enine + H2O = dodecanoate + sphing-4-enine. It catalyses the reaction N-tetradecanoylsphing-4-enine + H2O = tetradecanoate + sphing-4-enine. The enzyme catalyses N-hexadecanoylsphing-4-enine + H2O = sphing-4-enine + hexadecanoate. The catalysed reaction is N-octadecanoylsphing-4-enine + H2O = sphing-4-enine + octadecanoate. It carries out the reaction N-dodecanoyl-(4R)-hydroxysphinganine + H2O = (4R)-hydroxysphinganine + dodecanoate. It catalyses the reaction N-(dodecanoyl)-sphinganine + H2O = dodecanoate + sphinganine. The enzyme catalyses N-(acetyl)-sphing-4-enine + H2O = sphing-4-enine + acetate. The catalysed reaction is N-(hexanoyl)sphing-4-enine + H2O = hexanoate + sphing-4-enine. It carries out the reaction N-octanoylsphing-4-enine + H2O = octanoate + sphing-4-enine. It catalyses the reaction N-(9Z-octadecenoyl)-sphing-4-enine + H2O = sphing-4-enine + (9Z)-octadecenoate. The enzyme catalyses N-dodecanoylethanolamine + H2O = dodecanoate + ethanolamine. The protein operates within lipid metabolism; sphingolipid metabolism. Functionally, lysosomal ceramidase that hydrolyzes sphingolipid ceramides into sphingosine and free fatty acids at acidic pH. Ceramides, sphingosine, and its phosphorylated form sphingosine-1-phosphate are bioactive lipids that mediate cellular signaling pathways regulating several biological processes including cell proliferation, apoptosis and differentiation. Has a higher catalytic efficiency towards C12-ceramides versus other ceramides. Also catalyzes the reverse reaction allowing the synthesis of ceramides from fatty acids and sphingosine. For the reverse synthetic reaction, the natural sphingosine D-erythro isomer is more efficiently utilized as a substrate compared to D-erythro-dihydrosphingosine and D-erythro-phytosphingosine, while the fatty acids with chain lengths of 12 or 14 carbons are the most efficiently used. Also has an N-acylethanolamine hydrolase activity. By regulating the levels of ceramides, sphingosine and sphingosine-1-phosphate in the epidermis, mediates the calcium-induced differentiation of epidermal keratinocytes. Also indirectly regulates tumor necrosis factor/TNF-induced apoptosis. By regulating the intracellular balance between ceramides and sphingosine, in adrenocortical cells, probably also acts as a regulator of steroidogenesis. This chain is Acid ceramidase, found in Heterocephalus glaber (Naked mole rat).